The following is a 309-amino-acid chain: Ornithine carbamoyltransferase (309 aa).

Carbamoyl phosphate-binding positions include 51-54, Gln78, Arg102, and 129-132; these read STRT and HPVQ. L-ornithine contacts are provided by residues Asn160, Asp224, and 228–229; that span reads SM. Carbamoyl phosphate contacts are provided by residues 264-265 and Arg292; that span reads CL.

The protein belongs to the aspartate/ornithine carbamoyltransferase superfamily. OTCase family.

It localises to the cytoplasm. The catalysed reaction is carbamoyl phosphate + L-ornithine = L-citrulline + phosphate + H(+). The protein operates within amino-acid biosynthesis; L-arginine biosynthesis; L-arginine from L-ornithine and carbamoyl phosphate: step 1/3. Its function is as follows. Reversibly catalyzes the transfer of the carbamoyl group from carbamoyl phosphate (CP) to the N(epsilon) atom of ornithine (ORN) to produce L-citrulline. The chain is Ornithine carbamoyltransferase from Campylobacter fetus subsp. fetus (strain 82-40).